A 274-amino-acid polypeptide reads, in one-letter code: Urease accessory protein UreD (274 aa).

It belongs to the UreD family. In terms of assembly, ureD, UreF and UreG form a complex that acts as a GTP-hydrolysis-dependent molecular chaperone, activating the urease apoprotein by helping to assemble the nickel containing metallocenter of UreC. The UreE protein probably delivers the nickel.

It is found in the cytoplasm. In terms of biological role, required for maturation of urease via the functional incorporation of the urease nickel metallocenter. In Enterobacter sp. (strain 638), this protein is Urease accessory protein UreD.